The following is a 44-amino-acid chain: Protein PsbN (44 aa).

The helical transmembrane segment at 6 to 26 threads the bilayer; the sequence is FFFSLFVWCLLLSITAYSLYV.

The protein belongs to the PsbN family.

Its subcellular location is the plastid. The protein resides in the chloroplast thylakoid membrane. Functionally, may play a role in photosystem I and II biogenesis. The chain is Protein PsbN from Tupiella akineta (Green alga).